Consider the following 289-residue polypeptide: Probable porphobilinogen deaminase (289 aa).

S-(dipyrrolylmethanemethyl)cysteine is present on Cys234.

It belongs to the HMBS family. The cofactor is dipyrromethane.

The enzyme catalyses 4 porphobilinogen + H2O = hydroxymethylbilane + 4 NH4(+). It participates in porphyrin-containing compound metabolism; protoporphyrin-IX biosynthesis; coproporphyrinogen-III from 5-aminolevulinate: step 2/4. Functionally, tetrapolymerization of the monopyrrole PBG into the hydroxymethylbilane pre-uroporphyrinogen in several discrete steps. The protein is Probable porphobilinogen deaminase (hemC) of Archaeoglobus fulgidus (strain ATCC 49558 / DSM 4304 / JCM 9628 / NBRC 100126 / VC-16).